Reading from the N-terminus, the 466-residue chain is Na(+)/H(+) antiporter NhaA (466 aa).

Helical transmembrane passes span V32–A52, L74–I94, A111–L131, G142–G162, F172–F192, D195–L215, G221–I241, G280–L300, L310–L330, V348–L368, and E379–L399.

It belongs to the NhaA Na(+)/H(+) (TC 2.A.33) antiporter family.

Its subcellular location is the cell membrane. It catalyses the reaction Na(+)(in) + 2 H(+)(out) = Na(+)(out) + 2 H(+)(in). Its function is as follows. Na(+)/H(+) antiporter that extrudes sodium in exchange for external protons. In Streptomyces avermitilis (strain ATCC 31267 / DSM 46492 / JCM 5070 / NBRC 14893 / NCIMB 12804 / NRRL 8165 / MA-4680), this protein is Na(+)/H(+) antiporter NhaA.